The sequence spans 200 residues: Transgelin (200 aa).

The residue at position 2 (Ser-2) is an N-acetylserine. Ser-11 is modified (phosphoserine). The 111-residue stretch at 26–136 (PEAIQNIKIW…QTLKSLSRYA (111 aa)) folds into the Calponin-homology (CH) domain. Positions 144 to 168 (FPVLGPQLSTKKPRPPVKSKPKHLQ) are disordered. Residues 151 to 164 (LSTKKPRPPVKSKP) are interaction with SH3 domain of ABP1. Residues 154 to 165 (KKPRPPVKSKPK) are compositionally biased toward basic residues.

As to quaternary structure, binds to actin. Interacts with ABP1.

It localises to the cytoplasm. The protein resides in the cytoskeleton. Its subcellular location is the actin patch. In terms of biological role, has actin-binding and actin-bundling activity. Stabilizes actin filaments against disassembly. This Saccharomyces cerevisiae (strain ATCC 204508 / S288c) (Baker's yeast) protein is Transgelin (SCP1).